The primary structure comprises 276 residues: Small ribosomal subunit protein uS2 (276 aa).

Belongs to the universal ribosomal protein uS2 family.

This Chlamydia abortus (strain DSM 27085 / S26/3) (Chlamydophila abortus) protein is Small ribosomal subunit protein uS2.